We begin with the raw amino-acid sequence, 98 residues long: Large ribosomal subunit protein uL23 (98 aa).

The protein belongs to the universal ribosomal protein uL23 family. As to quaternary structure, part of the 50S ribosomal subunit. Contacts protein L29, and trigger factor when it is bound to the ribosome.

Its function is as follows. One of the early assembly proteins it binds 23S rRNA. One of the proteins that surrounds the polypeptide exit tunnel on the outside of the ribosome. Forms the main docking site for trigger factor binding to the ribosome. This is Large ribosomal subunit protein uL23 from Ruegeria sp. (strain TM1040) (Silicibacter sp.).